A 131-amino-acid polypeptide reads, in one-letter code: Large ribosomal subunit protein bL12 (131 aa).

The protein belongs to the bacterial ribosomal protein bL12 family. As to quaternary structure, homodimer. Part of the ribosomal stalk of the 50S ribosomal subunit. Forms a multimeric L10(L12)X complex, where L10 forms an elongated spine to which 2 to 4 L12 dimers bind in a sequential fashion. Binds GTP-bound translation factors.

In terms of biological role, forms part of the ribosomal stalk which helps the ribosome interact with GTP-bound translation factors. Is thus essential for accurate translation. The sequence is that of Large ribosomal subunit protein bL12 from Prochlorococcus marinus (strain MIT 9215).